A 189-amino-acid polypeptide reads, in one-letter code: UPF0398 protein LVIS_0849 (189 aa).

Belongs to the UPF0398 family.

This Levilactobacillus brevis (strain ATCC 367 / BCRC 12310 / CIP 105137 / JCM 1170 / LMG 11437 / NCIMB 947 / NCTC 947) (Lactobacillus brevis) protein is UPF0398 protein LVIS_0849.